A 273-amino-acid chain; its full sequence is Ribosomal RNA small subunit methyltransferase A (273 aa).

S-adenosyl-L-methionine-binding residues include asparagine 18, leucine 20, glycine 45, glutamate 66, aspartate 91, and asparagine 113.

It belongs to the class I-like SAM-binding methyltransferase superfamily. rRNA adenine N(6)-methyltransferase family. RsmA subfamily.

The protein localises to the cytoplasm. It carries out the reaction adenosine(1518)/adenosine(1519) in 16S rRNA + 4 S-adenosyl-L-methionine = N(6)-dimethyladenosine(1518)/N(6)-dimethyladenosine(1519) in 16S rRNA + 4 S-adenosyl-L-homocysteine + 4 H(+). Functionally, specifically dimethylates two adjacent adenosines (A1518 and A1519) in the loop of a conserved hairpin near the 3'-end of 16S rRNA in the 30S particle. May play a critical role in biogenesis of 30S subunits. The chain is Ribosomal RNA small subunit methyltransferase A from Escherichia coli (strain SE11).